Here is a 184-residue protein sequence, read N- to C-terminus: NADH-quinone oxidoreductase subunit B (184 aa).

Residues cysteine 37, cysteine 38, cysteine 103, and cysteine 132 each contribute to the [4Fe-4S] cluster site.

It belongs to the complex I 20 kDa subunit family. In terms of assembly, NDH-1 is composed of 14 different subunits. Subunits NuoB, C, D, E, F, and G constitute the peripheral sector of the complex. [4Fe-4S] cluster serves as cofactor.

It is found in the cell membrane. The enzyme catalyses a quinone + NADH + 5 H(+)(in) = a quinol + NAD(+) + 4 H(+)(out). In terms of biological role, NDH-1 shuttles electrons from NADH, via FMN and iron-sulfur (Fe-S) centers, to quinones in the respiratory chain. The immediate electron acceptor for the enzyme in this species is believed to be a menaquinone. Couples the redox reaction to proton translocation (for every two electrons transferred, four hydrogen ions are translocated across the cytoplasmic membrane), and thus conserves the redox energy in a proton gradient. This chain is NADH-quinone oxidoreductase subunit B, found in Mycobacteroides abscessus (strain ATCC 19977 / DSM 44196 / CCUG 20993 / CIP 104536 / JCM 13569 / NCTC 13031 / TMC 1543 / L948) (Mycobacterium abscessus).